The chain runs to 92 residues: Small ribosomal subunit protein uS19 (92 aa).

The protein belongs to the universal ribosomal protein uS19 family.

In terms of biological role, protein S19 forms a complex with S13 that binds strongly to the 16S ribosomal RNA. This chain is Small ribosomal subunit protein uS19, found in Gloeobacter violaceus (strain ATCC 29082 / PCC 7421).